A 190-amino-acid polypeptide reads, in one-letter code: Recombination protein RecR (190 aa).

The segment at Cys58–Cys73 adopts a C4-type zinc-finger fold. One can recognise a Toprim domain in the interval Asn81–Pro167.

It belongs to the RecR family.

May play a role in DNA repair. It seems to be involved in an RecBC-independent recombinational process of DNA repair. It may act with RecF and RecO. This is Recombination protein RecR from Campylobacter jejuni subsp. jejuni serotype O:23/36 (strain 81-176).